The sequence spans 329 residues: Interleukin-12 subunit beta (329 aa).

Positions 1–22 (MCHQWLVLSWFSLVLLASPLMA) are cleaved as a signal peptide. The Ig-like C2-type domain maps to 29–106 (DVYVVELDWY…LSHSHLLLHK (78 aa)). A disulfide bridge links Cys-50 with Cys-90. Asn-125, Asn-135, and Asn-223 each carry an N-linked (GlcNAc...) asparagine glycan. The Fibronectin type-III domain maps to 238–329 (PPKNLQLKPL…WSEWASVSCS (92 aa)).

Belongs to the IL-12B family. In terms of assembly, heterodimer with IL12A; disulfide-linked. The heterodimer is known as interleukin IL-12. Heterodimer with IL23A; disulfide-linked. The heterodimer is known as interleukin IL-23. Also secreted as a monomer. Interacts with NBR1; this interaction promotes IL-12 secretion.

The protein resides in the secreted. Cytokine that can act as a growth factor for activated T and NK cells, enhance the lytic activity of NK/lymphokine-activated killer cells, and stimulate the production of IFN-gamma by resting PBMC. Functionally, associates with IL23A to form the IL-23 interleukin, a heterodimeric cytokine which functions in innate and adaptive immunity. IL-23 may constitute with IL-17 an acute response to infection in peripheral tissues. IL-23 binds to a heterodimeric receptor complex composed of IL12RB1 and IL23R, activates the Jak-Stat signaling cascade, stimulates memory rather than naive T-cells and promotes production of pro-inflammatory cytokines. IL-23 induces autoimmune inflammation and thus may be responsible for autoimmune inflammatory diseases and may be important for tumorigenesis. The polypeptide is Interleukin-12 subunit beta (IL12B) (Equus caballus (Horse)).